Reading from the N-terminus, the 499-residue chain is Lysine--tRNA ligase (499 aa).

The Mg(2+) site is built by E408 and E415.

This sequence belongs to the class-II aminoacyl-tRNA synthetase family. As to quaternary structure, homodimer. It depends on Mg(2+) as a cofactor.

The protein localises to the cytoplasm. The catalysed reaction is tRNA(Lys) + L-lysine + ATP = L-lysyl-tRNA(Lys) + AMP + diphosphate. In Bacillus cereus (strain ATCC 10987 / NRS 248), this protein is Lysine--tRNA ligase.